Reading from the N-terminus, the 338-residue chain is Tetraacyldisaccharide 4'-kinase (338 aa).

66–73 (IAGGAGKT) contacts ATP.

This sequence belongs to the LpxK family.

It catalyses the reaction a lipid A disaccharide + ATP = a lipid IVA + ADP + H(+). The protein operates within glycolipid biosynthesis; lipid IV(A) biosynthesis; lipid IV(A) from (3R)-3-hydroxytetradecanoyl-[acyl-carrier-protein] and UDP-N-acetyl-alpha-D-glucosamine: step 6/6. Transfers the gamma-phosphate of ATP to the 4'-position of a tetraacyldisaccharide 1-phosphate intermediate (termed DS-1-P) to form tetraacyldisaccharide 1,4'-bis-phosphate (lipid IVA). The protein is Tetraacyldisaccharide 4'-kinase of Delftia acidovorans (strain DSM 14801 / SPH-1).